A 164-amino-acid chain; its full sequence is Mediator of RNA polymerase II transcription subunit 21 (164 aa).

The tract at residues 49 to 81 (APLPANQTQQGSTLGSNRQTVSPSTQAEAESNF) is disordered. Residues 53 to 81 (ANQTQQGSTLGSNRQTVSPSTQAEAESNF) are compositionally biased toward polar residues. A coiled-coil region spans residues 114-146 (ESQLKIIDDLSKELQSVEQEQVKKIQEKDKLLK).

It belongs to the Mediator complex subunit 21 family. As to quaternary structure, component of the Mediator complex.

Its subcellular location is the nucleus. In terms of biological role, component of the Mediator complex, a coactivator involved in the regulated transcription of nearly all RNA polymerase II-dependent genes. Mediator functions as a bridge to convey information from gene-specific regulatory proteins to the basal RNA polymerase II transcription machinery. Mediator is recruited to promoters by direct interactions with regulatory proteins and serves as a scaffold for the assembly of a functional preinitiation complex with RNA polymerase II and the general transcription factors. This Scheffersomyces stipitis (strain ATCC 58785 / CBS 6054 / NBRC 10063 / NRRL Y-11545) (Yeast) protein is Mediator of RNA polymerase II transcription subunit 21 (SRB7).